The sequence spans 204 residues: dITP/XTP pyrophosphatase (204 aa).

8–13 provides a ligand contact to substrate; the sequence is SNNAKK. Positions 43 and 72 each coordinate Mg(2+). The active-site Proton acceptor is Asp-72. Residues Ser-73, 155–158, Lys-180, and 185–186 each bind substrate; these read FGYD and HR.

Belongs to the HAM1 NTPase family. As to quaternary structure, homodimer. Requires Mg(2+) as cofactor.

It catalyses the reaction XTP + H2O = XMP + diphosphate + H(+). It carries out the reaction dITP + H2O = dIMP + diphosphate + H(+). The enzyme catalyses ITP + H2O = IMP + diphosphate + H(+). In terms of biological role, pyrophosphatase that catalyzes the hydrolysis of nucleoside triphosphates to their monophosphate derivatives, with a high preference for the non-canonical purine nucleotides XTP (xanthosine triphosphate), dITP (deoxyinosine triphosphate) and ITP. Seems to function as a house-cleaning enzyme that removes non-canonical purine nucleotides from the nucleotide pool, thus preventing their incorporation into DNA/RNA and avoiding chromosomal lesions. This is dITP/XTP pyrophosphatase from Cutibacterium acnes (strain DSM 16379 / KPA171202) (Propionibacterium acnes).